The sequence spans 328 residues: Fructokinase-2 (328 aa).

It belongs to the carbohydrate kinase PfkB family.

The enzyme catalyses D-fructose + ATP = D-fructose 6-phosphate + ADP + H(+). Its pathway is glycan biosynthesis; starch biosynthesis. Its function is as follows. May play an important role in maintaining the flux of carbon towards starch formation. The chain is Fructokinase-2 (FRK2) from Solanum habrochaites (Wild tomato).